The primary structure comprises 156 residues: DNA gyrase inhibitor (156 aa).

Belongs to the DNA gyrase inhibitor family. In terms of assembly, interacts with DNA gyrase.

It localises to the cytoplasm. Its function is as follows. Inhibits the supercoiling activity of DNA gyrase. Acts by inhibiting DNA gyrase at an early step, prior to (or at the step of) binding of DNA by the gyrase. It protects cells against toxins that target DNA gyrase, by inhibiting activity of these toxins and reducing the formation of lethal double-strand breaks in the cell. This chain is DNA gyrase inhibitor, found in Serratia proteamaculans (strain 568).